A 342-amino-acid chain; its full sequence is Protein RecA (342 aa).

65–72 is a binding site for ATP; it reads GPESSGKT.

The protein belongs to the RecA family.

The protein resides in the cytoplasm. In terms of biological role, can catalyze the hydrolysis of ATP in the presence of single-stranded DNA, the ATP-dependent uptake of single-stranded DNA by duplex DNA, and the ATP-dependent hybridization of homologous single-stranded DNAs. It interacts with LexA causing its activation and leading to its autocatalytic cleavage. This is Protein RecA from Caldanaerobacter subterraneus subsp. tengcongensis (strain DSM 15242 / JCM 11007 / NBRC 100824 / MB4) (Thermoanaerobacter tengcongensis).